The chain runs to 277 residues: Probable cytochrome c oxidase subunit 3 (277 aa).

6 helical membrane passes run 20–40 (PWPILTSFALLILVAGGVSFM), 45–65 (FNHYILAFGVISVAYCLYSWW), 88–108 (IGMALFILTEIMFFGVFFASF), 173–193 (CVTALGLTIILGIFFTCMQAY), 211–231 (FYLATGFHGAHVIIGTIFLIV), and 255–275 (AWYWHFVDVVWLFLFTFVYIF).

This sequence belongs to the cytochrome c oxidase subunit 3 family.

The protein localises to the cell membrane. The enzyme catalyses 4 Fe(II)-[cytochrome c] + O2 + 8 H(+)(in) = 4 Fe(III)-[cytochrome c] + 2 H2O + 4 H(+)(out). The protein is Probable cytochrome c oxidase subunit 3 (ctaE) of Rickettsia bellii (strain RML369-C).